Consider the following 412-residue polypeptide: Methylmalonic aciduria type A homolog, mitochondrial (412 aa).

A mitochondrion-targeting transit peptide spans 1–15 (MVVRALVRAHPLSRI). Residues 132 to 140 (GSPGVGKSS), Asp-275, and 311 to 313 (SIM) each bind GTP.

It belongs to the SIMIBI class G3E GTPase family. ArgK/MeaB subfamily.

The protein resides in the mitochondrion. In terms of biological role, may have GTPase activity. May also bind and hydrolyze ATP. May function as chaperone. Likely to have a role in propionyl-CoA metabolism and adenosylcobalamin synthesis. The chain is Methylmalonic aciduria type A homolog, mitochondrial from Caenorhabditis briggsae.